We begin with the raw amino-acid sequence, 514 residues long: Maturase K (514 aa).

This sequence belongs to the intron maturase 2 family. MatK subfamily.

Its subcellular location is the plastid. It is found in the chloroplast. Functionally, usually encoded in the trnK tRNA gene intron. Probably assists in splicing its own and other chloroplast group II introns. This is Maturase K from Plantago argentea (Silver plantain).